Reading from the N-terminus, the 266-residue chain is Glucosamine-6-phosphate deaminase (266 aa).

The active-site Proton acceptor; for enolization step is the D72. The active-site For ring-opening step is D141. H143 (proton acceptor; for ring-opening step) is an active-site residue. E148 acts as the For ring-opening step in catalysis.

This sequence belongs to the glucosamine/galactosamine-6-phosphate isomerase family. NagB subfamily. As to quaternary structure, homohexamer.

The enzyme catalyses alpha-D-glucosamine 6-phosphate + H2O = beta-D-fructose 6-phosphate + NH4(+). It functions in the pathway amino-sugar metabolism; N-acetylneuraminate degradation; D-fructose 6-phosphate from N-acetylneuraminate: step 5/5. Its activity is regulated as follows. Allosterically activated by N-acetylglucosamine 6-phosphate (GlcNAc6P). In terms of biological role, catalyzes the reversible isomerization-deamination of glucosamine 6-phosphate (GlcN6P) to form fructose 6-phosphate (Fru6P) and ammonium ion. The sequence is that of Glucosamine-6-phosphate deaminase from Salmonella typhi.